The following is a 475-amino-acid chain: Squamosa promoter-binding-like protein 12 (475 aa).

The disordered stretch occupies residues 49–73; that stretch reads NHGSTNSSGGTFTSSSELANGSSKS. The span at 51–73 shows a compositional bias: low complexity; that stretch reads GSTNSSGGTFTSSSELANGSSKS. The segment at 177–254 adopts an SBP-type zinc-finger fold; the sequence is SSYCQVEGCK…SDHNARRRKP (78 aa). Positions 180, 185, 202, 205, 221, 224, 228, and 240 each coordinate Zn(2+). Residues 237 to 253 carry the Bipartite nuclear localization signal motif; it reads KKSCRRRLSDHNARRRK. Positions 437-475 are disordered; the sequence is GGGGFWQDGDDPPPLDHASQAQAFMHPGNGSSSGYGHLH. A compositionally biased stretch (polar residues) spans 465–475; that stretch reads NGSSSGYGHLH.

Expressed in young panicles.

The protein localises to the nucleus. In terms of biological role, trans-acting factor that binds specifically to the consensus nucleotide sequence 5'-TNCGTACAA-3'. May be involved in panicle development. The polypeptide is Squamosa promoter-binding-like protein 12 (SPL12) (Oryza sativa subsp. indica (Rice)).